A 587-amino-acid polypeptide reads, in one-letter code: MDKYLNSFVDHLSEWSSRAFRNNSSSANQSASNKELEQVFEQINAIVENHNNKLTTAFDKISYRVAHKITHLVESHSLVFNYATLVLIASALVVIGSFTSISSIPFTALPPTREHSLFDPTDFDVDHDCHVIYRENDEDKKKKKKSKRFFDMMDEKHAIILPLTSGCTLLALYFVIKKLHLNWLKYVVKILNFNITLLNIPAGTFVYSYFLNSLFRNLSHLASWNPLVVLPRYRVTIADDNEDLNKIGGFVTNLNYKDGLTNSVVHKKTLDEIEKDHWMKHFYRRELVEPKDIKSKRQISNMYLNSALIVSFVLSIVSTVYFYLSPNDWLISNAVSMNMAIWSIAQLKLKNLKSGALILIALFFYDICFVFGTDVMVTVATNLDIPVKLSLPVKFNTAQNNFNFSILGLGDIALPGMFIAMCYKYDIWKWHLDHDDTEFHFLNWSYVGKYFITAMVSYVASLVSAMVSLSIFNTAQPALLYIVPSLLISTILVACWNKDFKQFWNFQYDTIEVDKSLKKAIEKKENSITYSTFILSEYYNDADKYALLGDDVNENFDDDEEFVQEEDLSDSSEEELSEEDLLDDESS.

Over 1 to 85 (MDKYLNSFVD…HSLVFNYATL (85 aa)) the chain is Lumenal. A helical transmembrane segment spans residues 86–106 (VLIASALVVIGSFTSISSIPF). The Cytoplasmic segment spans residues 107–156 (TALPPTREHSLFDPTDFDVDHDCHVIYRENDEDKKKKKKSKRFFDMMDEK). The helical transmembrane segment at 157-177 (HAIILPLTSGCTLLALYFVIK) threads the bilayer. The Lumenal segment spans residues 178-192 (KLHLNWLKYVVKILN). Residues 193 to 213 (FNITLLNIPAGTFVYSYFLNS) form a helical membrane-spanning segment. Residues 214–303 (LFRNLSHLAS…KSKRQISNMY (90 aa)) are Cytoplasmic-facing. The chain crosses the membrane as a helical span at residues 304–324 (LNSALIVSFVLSIVSTVYFYL). The Lumenal portion of the chain corresponds to 325 to 328 (SPND). The chain crosses the membrane as a helical span at residues 329 to 349 (WLISNAVSMNMAIWSIAQLKL). At 350-351 (KN) the chain is on the cytoplasmic side. The helical transmembrane segment at 352–372 (LKSGALILIALFFYDICFVFG) threads the bilayer. Asp366 is a catalytic residue. Residues 373 to 401 (TDVMVTVATNLDIPVKLSLPVKFNTAQNN) are Lumenal-facing. Residues 402-422 (FNFSILGLGDIALPGMFIAMC) traverse the membrane as a helical segment. Residue Asp411 is part of the active site. Residues 423-450 (YKYDIWKWHLDHDDTEFHFLNWSYVGKY) are Cytoplasmic-facing. A helical transmembrane segment spans residues 451–471 (FITAMVSYVASLVSAMVSLSI). At 472-475 (FNTA) the chain is on the lumenal side. Residues 476-496 (QPALLYIVPSLLISTILVACW) traverse the membrane as a helical segment. The PAL motif lies at 477–479 (PAL). The Cytoplasmic portion of the chain corresponds to 497 to 587 (NKDFKQFWNF…EEDLLDDESS (91 aa)). Positions 561–587 (EFVQEEDLSDSSEEELSEEDLLDDESS) are disordered.

The protein belongs to the peptidase A22B family.

It is found in the membrane. Its subcellular location is the endoplasmic reticulum membrane. Functionally, may act as intramembrane protease. The chain is Probable intramembrane protease YKL100C from Saccharomyces cerevisiae (strain ATCC 204508 / S288c) (Baker's yeast).